The following is a 126-amino-acid chain: Ribonuclease P protein component (126 aa).

This sequence belongs to the RnpA family. In terms of assembly, consists of a catalytic RNA component (M1 or rnpB) and a protein subunit.

The catalysed reaction is Endonucleolytic cleavage of RNA, removing 5'-extranucleotides from tRNA precursor.. Functionally, RNaseP catalyzes the removal of the 5'-leader sequence from pre-tRNA to produce the mature 5'-terminus. It can also cleave other RNA substrates such as 4.5S RNA. The protein component plays an auxiliary but essential role in vivo by binding to the 5'-leader sequence and broadening the substrate specificity of the ribozyme. This chain is Ribonuclease P protein component, found in Brevibacillus brevis (strain 47 / JCM 6285 / NBRC 100599).